We begin with the raw amino-acid sequence, 172 residues long: C-phycocyanin subunit beta (172 aa).

Asn-72 carries the N4-methylasparagine modification. Positions 82 and 153 each coordinate (2R,3E)-phycocyanobilin.

It belongs to the phycobiliprotein family. As to quaternary structure, heterodimer of an alpha and a beta subunit, which further assembles into trimers and the trimers into hexamers. Post-translationally, contains two covalently linked bilin chromophores. The chromophore on position 82 is added by the phycocyanobilin lyase CpcUS, while the chromophore on position 153 is added by the phycocyanobilin lyase CpcT.

Its subcellular location is the cellular thylakoid membrane. In terms of biological role, light-harvesting photosynthetic bile pigment-protein from the phycobiliprotein complex (phycobilisome, PBS). Phycocyanin is the major phycobiliprotein in the PBS rod. The sequence is that of C-phycocyanin subunit beta (cpcB) from Picosynechococcus sp. (strain ATCC 27264 / PCC 7002 / PR-6) (Agmenellum quadruplicatum).